The primary structure comprises 260 residues: Trans-aconitate 2-methyltransferase (260 aa).

The protein belongs to the methyltransferase superfamily. Tam family.

The protein localises to the cytoplasm. It catalyses the reaction trans-aconitate + S-adenosyl-L-methionine = (E)-3-(methoxycarbonyl)pent-2-enedioate + S-adenosyl-L-homocysteine. Its function is as follows. Catalyzes the S-adenosylmethionine monomethyl esterification of trans-aconitate. The protein is Trans-aconitate 2-methyltransferase of Methylobacterium radiotolerans (strain ATCC 27329 / DSM 1819 / JCM 2831 / NBRC 15690 / NCIMB 10815 / 0-1).